Consider the following 143-residue polypeptide: Large ribosomal subunit protein uL11 (143 aa).

The protein belongs to the universal ribosomal protein uL11 family. Part of the ribosomal stalk of the 50S ribosomal subunit. Interacts with L10 and the large rRNA to form the base of the stalk. L10 forms an elongated spine to which L12 dimers bind in a sequential fashion forming a multimeric L10(L12)X complex. In terms of processing, one or more lysine residues are methylated.

Its function is as follows. Forms part of the ribosomal stalk which helps the ribosome interact with GTP-bound translation factors. The polypeptide is Large ribosomal subunit protein uL11 (Erythrobacter litoralis (strain HTCC2594)).